The sequence spans 483 residues: MATPLQIMPLPVWPITFLEDAVVYLSALFTPWFTAFCVLWLHRYVRLIVHCYSHWTYKSKPIPSKPSYTSDDVTVVIPTIHDNFDELRPSLESILATKPHELIMVTTADKFEDLQRVAKTLSSPNIRIFCTQYANKRIQVCEALPKITTRITIMADDDVTWPSTMMPWILAPFEDPKIGGVGTCQRVKRVREGGLGLRIWNWLGAAYIERRNFEISATHNMDGGTSCMSGRTGAYRSEILRDYEFLEGFMKEEWWGKILKADDDNFVSRWLVSHKWKTWIQYEQECELETTLEDNIKFLYQCSRWARSNWRSNWTSLVKERHVWKQQWWCTYALHIATFTSLAFVFDFLILAALWWGTEGWEPVNRNRAIYAQLAFLAFSKVVKLVGLFRRHPADIMFLPVSIIFGYFHGLIKIYAGLTLNMTSWGSRTDGDTDDAHRLAPGPVRCSSLNTPRSEHKLPHYMQERDEIVNEKQQMREEEWEHL.

Residues 21-41 (AVVYLSALFTPWFTAFCVLWL) form a helical membrane-spanning segment. The Dxd motif motif lies at 156–158 (DDD). Residues 301 to 305 (QCSRW) carry the QxxxRW motif motif. The N-linked (GlcNAc...) asparagine glycan is linked to Asn-313. Transmembrane regions (helical) follow at residues 336 to 356 (IATF…ALWW), 369 to 389 (AIYA…VGLF), and 396 to 416 (IMFL…KIYA). N-linked (GlcNAc...) asparagine glycosylation is present at Asn-421.

Belongs to the GT2 glycosyltransferase family.

It localises to the cell membrane. Its function is as follows. Glycosyltransferase that plays an important role in infection-related morphogenesis and pathogenesis. Involved in stress tolerance and hyphal hydrophobicity via its regulation of the expression of nydrophobin MPG1. May regulate growth, pathogenicity, and cell wall integrity (CWI) through glycosylation of heat shock protein SSB1, and other (unidentified) substrates may contribute to conidiation. Candidate proteins as potential substrates of GT2 include several heat shock proteins (SSB1/MGG_02503, MGG_06759 and MGG_06958), two coiled-coil domain-containing proteins (MGG_04321 and MGG_09571), aminopeptidase 2 (MGG_16472), and a nuclease domain-containing protein (MGG_12646). The polypeptide is Type 2 glycosyltransferase (Pyricularia oryzae (strain 70-15 / ATCC MYA-4617 / FGSC 8958) (Rice blast fungus)).